A 72-amino-acid polypeptide reads, in one-letter code: Teretoxin Tsu11.2 (72 aa).

An N-terminal signal peptide occupies residues 1–21 (MMAKATMAFCFLLMLTTVMLP). Residues 22–30 (TEGKTIAGR) constitute a propeptide that is removed on maturation.

It belongs to the teretoxin H (TH) superfamily. Post-translationally, contains 4 disulfide bonds. Expressed by the venom duct.

The protein localises to the secreted. The chain is Teretoxin Tsu11.2 from Terebra subulata (Chocolate spotted auger).